The primary structure comprises 503 residues: Proton-coupled zinc antiporter SLC30A1 (503 aa).

Topologically, residues 1–10 are cytoplasmic; the sequence is MGCWGRNRGR. Residues 11 to 31 traverse the membrane as a helical segment; sequence LLCMLLLTFMFMVLEVVVSRV. At 32–35 the chain is on the extracellular side; it reads TASL. A helical membrane pass occupies residues 36–56; that stretch reads AMLSDSFHMLSDVLALVVALV. 2 residues coordinate Zn(2+): H43 and D47. The Cytoplasmic portion of the chain corresponds to 57 to 78; the sequence is AERFARRTHATQKNTFGWIRAE. The helical transmembrane segment at 79–99 threads the bilayer; the sequence is VMGALVNAIFLTGLCFAILLE. Over 100–113 the chain is Extracellular; sequence AVERFIEPHEMQQP. The helical transmembrane segment at 114-134 threads the bilayer; sequence LVVLSVGVAGLLVNVLGLCLF. The Cytoplasmic segment spans residues 135–243; it reads HHHSGEGQGA…RAGQLNMRGV (109 aa). The interval 140-213 is disordered; it reads EGQGAGHGHS…PEKLRSDDPV (74 aa). Residues 145–156 are 6 X 2 AA approximate repeats of H-G; that stretch reads GHGHSHGHGHGH. A compositionally biased stretch (basic residues) spans 147-165; that stretch reads GHSHGHGHGHLAKGARKAG. Residues 184–196 are compositionally biased toward polar residues; that stretch reads TNTLVANTSNSNG. Residues 200–211 show a composition bias toward basic and acidic residues; it reads DQAEPEKLRSDD. A helical transmembrane segment spans residues 244–264; the sequence is FLHVLGDALGSVIVVVNALVF. The Zn(2+) site is built by H246 and D250. The Extracellular segment spans residues 265 to 303; the sequence is YFNWKGCTEDDFCTNPCFPDPCKSSVEIINSTQAPMRDA. N-linked (GlcNAc...) asparagine glycosylation occurs at N294. A helical transmembrane segment spans residues 304–324; it reads GPCWVLYLDPTLCIIMVCILL. The Cytoplasmic portion of the chain corresponds to 325 to 503; it reads YTTYPLLKES…VPNKQPESSL (179 aa). Phosphoserine is present on S502.

The protein belongs to the cation diffusion facilitator (CDF) transporter (TC 2.A.4) family. SLC30A subfamily. Homodimer. Interacts with TMEM163. Interacts and forms a complex with TMC6 and TMC8; the interaction regulates zinc transport into the ER. In terms of tissue distribution, widely expressed.

It is found in the cell membrane. The protein localises to the basolateral cell membrane. It localises to the cytoplasmic vesicle membrane. The protein resides in the cytoplasm. Its subcellular location is the endoplasmic reticulum membrane. It is found in the golgi apparatus membrane. The protein localises to the nucleus membrane. The enzyme catalyses Zn(2+)(in) + 2 H(+)(out) = Zn(2+)(out) + 2 H(+)(in). Functionally, zinc ion:proton antiporter that could function at the plasma membrane mediating zinc efflux from cells against its electrochemical gradient protecting them from intracellular zinc accumulation and toxicity. Alternatively, could prevent the transport to the plasma membrane of CACNB2, the L-type calcium channels regulatory subunit, through a yet to be defined mechanism. By modulating the expression of these channels at the plasma membrane, could prevent calcium and zinc influx into cells. By the same mechanism, could also prevent L-type calcium channels-mediated heavy metal influx into cells. In some cells, could also function as a zinc ion:proton antiporter mediating zinc entry into the lumen of cytoplasmic vesicles. In macrophages, can increase zinc ions concentration into the lumen of cytoplasmic vesicles containing engulfed bacteria and could help inactivate them. Forms a complex with TMC6/EVER1 and TMC8/EVER2 at the ER membrane of keratynocytes which facilitates zinc uptake into the ER. Down-regulates the activity of transcription factors induced by zinc and cytokines. The sequence is that of Proton-coupled zinc antiporter SLC30A1 from Mus musculus (Mouse).